Reading from the N-terminus, the 298-residue chain is MAPKVVDRRNTMPQLQAKSLEMRTPQATKTAVLVIGGAEDKVHGREILRTFFGRAGASKAYITIIPSASREPAIIGGRYIRIFEEMGAEKVEILDIREREQCESSQVKASLEACSGVFLTGGDQLRLCGVLSDTPVMEIIRQRVRGGQLTLAGTSAGAAVMGHHMIAGGGSGETPNRSLVDMATGLGLIPEVIVDQHFHNRNRMGRLISAVAAHPDRLGIGIDEDTCAVFERDGWLQVLGKGSVTIVDPTELTHTNEPHVGANEPLTVHNLRLHILSYGDRFHLYQRTVLPAVHRISS.

Residues Ser155, Glu173, and His197 each act as charge relay system in the active site.

It belongs to the peptidase S51 family.

The catalysed reaction is [L-4-(L-arginin-2-N-yl)aspartate](n) + H2O = [L-4-(L-arginin-2-N-yl)aspartate](n-1) + L-4-(L-arginin-2-N-yl)aspartate. Its function is as follows. Exopeptidase that catalyzes the hydrolytic cleavage of multi-L-arginyl-poly-L-aspartic acid (cyanophycin; a water-insoluble reserve polymer) into aspartate-arginine dipeptides. The polypeptide is Cyanophycinase (cphB) (Nostoc sp. (strain PCC 7120 / SAG 25.82 / UTEX 2576)).